A 430-amino-acid polypeptide reads, in one-letter code: Serine--tRNA ligase (430 aa).

An L-serine-binding site is contributed by 237–239; that stretch reads TAE. 268–270 is an ATP binding site; the sequence is RSE. Glu-291 is a binding site for L-serine. 355–358 is an ATP binding site; the sequence is EISS. Ser-391 is a binding site for L-serine.

It belongs to the class-II aminoacyl-tRNA synthetase family. Type-1 seryl-tRNA synthetase subfamily. As to quaternary structure, homodimer. The tRNA molecule binds across the dimer.

It is found in the cytoplasm. It catalyses the reaction tRNA(Ser) + L-serine + ATP = L-seryl-tRNA(Ser) + AMP + diphosphate + H(+). The catalysed reaction is tRNA(Sec) + L-serine + ATP = L-seryl-tRNA(Sec) + AMP + diphosphate + H(+). Its pathway is aminoacyl-tRNA biosynthesis; selenocysteinyl-tRNA(Sec) biosynthesis; L-seryl-tRNA(Sec) from L-serine and tRNA(Sec): step 1/1. Functionally, catalyzes the attachment of serine to tRNA(Ser). Is also able to aminoacylate tRNA(Sec) with serine, to form the misacylated tRNA L-seryl-tRNA(Sec), which will be further converted into selenocysteinyl-tRNA(Sec). The sequence is that of Serine--tRNA ligase from Yersinia pseudotuberculosis serotype O:1b (strain IP 31758).